Reading from the N-terminus, the 177-residue chain is ATP synthase subunit delta (177 aa).

Belongs to the ATPase delta chain family. F-type ATPases have 2 components, F(1) - the catalytic core - and F(0) - the membrane proton channel. F(1) has five subunits: alpha(3), beta(3), gamma(1), delta(1), epsilon(1). F(0) has three main subunits: a(1), b(2) and c(10-14). The alpha and beta chains form an alternating ring which encloses part of the gamma chain. F(1) is attached to F(0) by a central stalk formed by the gamma and epsilon chains, while a peripheral stalk is formed by the delta and b chains.

It localises to the cell inner membrane. Functionally, f(1)F(0) ATP synthase produces ATP from ADP in the presence of a proton or sodium gradient. F-type ATPases consist of two structural domains, F(1) containing the extramembraneous catalytic core and F(0) containing the membrane proton channel, linked together by a central stalk and a peripheral stalk. During catalysis, ATP synthesis in the catalytic domain of F(1) is coupled via a rotary mechanism of the central stalk subunits to proton translocation. In terms of biological role, this protein is part of the stalk that links CF(0) to CF(1). It either transmits conformational changes from CF(0) to CF(1) or is implicated in proton conduction. The sequence is that of ATP synthase subunit delta from Flavobacterium psychrophilum (strain ATCC 49511 / DSM 21280 / CIP 103535 / JIP02/86).